The sequence spans 338 residues: Transferrin receptor subunit ESAG7 (338 aa).

The N-terminal stretch at 1 to 17 is a signal peptide; the sequence is MRFWFVLLALLGKEIYA. Residues asparagine 26 and asparagine 110 are each glycosylated (N-linked (GlcNAc...) asparagine). Intrachain disulfides connect cysteine 34–cysteine 161, cysteine 84–cysteine 311, cysteine 144–cysteine 215, and cysteine 230–cysteine 247. Asparagine 234 carries an N-linked (GlcNAc...) asparagine glycan.

As to quaternary structure, heterodimer composed of ESAG6 and ESAG7. Post-translationally, N-glycosylated. Glycosylation is dispensable for heterodimer formation and host transferrin binding.

It is found in the cell membrane. The protein resides in the flagellar pocket. Its function is as follows. Transferrin receptor subunit involved in receptor-mediated acquisition of iron from the environment by binding host TF/transferrin. The sequence is that of Transferrin receptor subunit ESAG7 from Trypanosoma brucei brucei.